The primary structure comprises 307 residues: Acyl transferase (307 aa).

Residues S116, D213, and H243 each act as charge relay system in the active site.

This sequence belongs to the LuxD family.

It functions in the pathway lipid metabolism; fatty acid reduction for biolumincescence. Functionally, acyl transferase is part of the fatty acid reductase system required for aldehyde biosynthesis; it produces fatty acids for the luminescent reaction. This is Acyl transferase from Photorhabdus luminescens (Xenorhabdus luminescens).